The sequence spans 704 residues: Histone-lysine N-methyltransferase, H3 lysine-9 specific SUVH1 (704 aa).

Disordered stretches follow at residues 1–21 and 68–176; these read MEQGLRSDGNNPPSIDKTRVL and PFVA…QAEG. Composition is skewed to polar residues over residues 80–90 and 109–121; these read ESSQQTPSGVP and SFRTPTTANGNSG. Basic residues predominate over residues 159–170; sequence GKKRGRPKKPRR. Residues 265 to 412 enclose the YDG domain; the sequence is GNAPGIEVGD…CNVFKYKLLR (148 aa). The Pre-SET domain maps to 487 to 548; that stretch reads PSCHCVGGCQ…NCRNRMSQGG (62 aa). The Zn(2+) site is built by cysteine 489, cysteine 491, cysteine 495, cysteine 502, cysteine 504, cysteine 530, cysteine 534, cysteine 536, and cysteine 540. The 131-residue stretch at 551–681 folds into the SET domain; that stretch reads ARLEVFKTKN…PMQELTFDYG (131 aa). Residues 561 to 563, aspartate 593, tyrosine 595, arginine 635, and 638 to 639 each bind S-adenosyl-L-methionine; these read RGW and NH. Cysteine 641, cysteine 692, cysteine 694, and cysteine 699 together coordinate Zn(2+). The 17-residue stretch at 688-704 folds into the Post-SET domain; that stretch reads RRKKCLCGSLNCRGYFY.

Belongs to the class V-like SAM-binding methyltransferase superfamily. Histone-lysine methyltransferase family. Suvar3-9 subfamily. In terms of assembly, interacts with LHP1. As to expression, expressed in roots, stems, leaves and flowers.

It localises to the nucleus. It is found in the chromosome. It carries out the reaction N(6)-methyl-L-lysyl(27)-[histone H3] + S-adenosyl-L-methionine = N(6),N(6)-dimethyl-L-lysyl(27)-[histone H3] + S-adenosyl-L-homocysteine + H(+). The catalysed reaction is L-lysyl(9)-[histone H3] + 2 S-adenosyl-L-methionine = N(6),N(6)-dimethyl-L-lysyl(9)-[histone H3] + 2 S-adenosyl-L-homocysteine + 2 H(+). It catalyses the reaction L-lysyl(27)-[histone H3] + S-adenosyl-L-methionine = N(6)-methyl-L-lysyl(27)-[histone H3] + S-adenosyl-L-homocysteine + H(+). Its function is as follows. Histone methyltransferase. Methylates in vitro both 'Lys-9' and 'Lys-27' of histone H3. Required for in vivo dimethylation of 'Lys-9'. H3 'Lys-9' methylation represents a specific tag for epigenetic control for plant development and transcriptional repression. In Nicotiana tabacum (Common tobacco), this protein is Histone-lysine N-methyltransferase, H3 lysine-9 specific SUVH1 (SUVH1).